A 253-amino-acid chain; its full sequence is E3 ubiquitin-protein ligase MARCHF3 (253 aa).

An RING-CH-type zinc finger spans residues 63 to 123 (SPFNDRPMCR…ELCHFRFAVE (61 aa)). Zn(2+) is bound by residues C71, C74, C87, C89, H97, C100, C113, and C116. The next 2 membrane-spanning stretches (helical) occupy residues 145 to 165 (LFGD…SGWL) and 182 to 202 (AVGL…WTLV). S237 and S243 each carry phosphoserine.

As to quaternary structure, interacts with MARCHF2 and STX6. Expressed predominantly in lung, colon and spleen. Present in liver (at protein level).

It localises to the cytoplasmic vesicle membrane. The protein localises to the early endosome membrane. The catalysed reaction is S-ubiquitinyl-[E2 ubiquitin-conjugating enzyme]-L-cysteine + [acceptor protein]-L-lysine = [E2 ubiquitin-conjugating enzyme]-L-cysteine + N(6)-ubiquitinyl-[acceptor protein]-L-lysine.. It participates in protein modification; protein ubiquitination. In terms of biological role, E3 ubiquitin-protein ligase which may be involved in endosomal trafficking. E3 ubiquitin ligases accept ubiquitin from an E2 ubiquitin-conjugating enzyme in the form of a thioester and then directly transfer the ubiquitin to targeted substrates. The chain is E3 ubiquitin-protein ligase MARCHF3 (Marchf3) from Rattus norvegicus (Rat).